A 423-amino-acid chain; its full sequence is Serine--tRNA ligase (423 aa).

231-233 (TAE) contributes to the L-serine binding site. An ATP-binding site is contributed by 262–264 (RSE). Glu-285 lines the L-serine pocket. Residue 349–352 (EISS) coordinates ATP. Ser-384 contacts L-serine.

This sequence belongs to the class-II aminoacyl-tRNA synthetase family. Type-1 seryl-tRNA synthetase subfamily. As to quaternary structure, homodimer. The tRNA molecule binds across the dimer.

It localises to the cytoplasm. The enzyme catalyses tRNA(Ser) + L-serine + ATP = L-seryl-tRNA(Ser) + AMP + diphosphate + H(+). The catalysed reaction is tRNA(Sec) + L-serine + ATP = L-seryl-tRNA(Sec) + AMP + diphosphate + H(+). Its pathway is aminoacyl-tRNA biosynthesis; selenocysteinyl-tRNA(Sec) biosynthesis; L-seryl-tRNA(Sec) from L-serine and tRNA(Sec): step 1/1. Its function is as follows. Catalyzes the attachment of serine to tRNA(Ser). Is also able to aminoacylate tRNA(Sec) with serine, to form the misacylated tRNA L-seryl-tRNA(Sec), which will be further converted into selenocysteinyl-tRNA(Sec). This is Serine--tRNA ligase from Acinetobacter baumannii (strain AB307-0294).